Reading from the N-terminus, the 254-residue chain is MSPSTGVELYLDLLKRTVSNFIYQDATHVAGLITEAAFVEEARESGEDYPTVAHTMIGMKRLNNLQHCVESALRDGVPGDVLETGVWRGGACIFARGILKAYDVRDRTVWVADSFQGFPKITDDDHPMDAEMNLHQYNEAVDLPTSLATVQRNFSRYGLLDDQVRFLPGWFKDTMPTAPFERLAVLRMDGDSYGATMDVLTHAYPRLSPGGFAIIDDYCIPACREAVHEYRDRHGISDEIVEIDRQGVYWRRSA.

Residues 55 to 56 (TM), 83 to 87 (ETGVW), 113 to 117 (DSFQG), phenylalanine 171, and 189 to 190 (DG) contribute to the S-adenosyl-L-methionine site. The Mg(2+) site is built by aspartate 189, aspartate 216, and aspartate 217.

Belongs to the methyltransferase TylF/MycF family. Requires Mg(2+) as cofactor.

It catalyses the reaction mycinamicin III + S-adenosyl-L-methionine = mycinamicin IV + S-adenosyl-L-homocysteine + H(+). It participates in antibiotic biosynthesis; mycinamicin biosynthesis. In terms of biological role, O-methyltransferase that catalyzes the conversion of mycinamicin III to mycinamicin IV in the biosynthesis of mycinamicin, a 16-membered macrolide antibiotic. The chain is Mycinamicin III 3''-O-methyltransferase (mycF) from Micromonospora griseorubida.